The primary structure comprises 142 residues: Peptide methionine sulfoxide reductase MsrB (142 aa).

The region spanning 13–135 is the MsrB domain; it reads EKDWKVELSE…NSLSMTFKGE (123 aa). Residues C52, C55, C101, and C104 each contribute to the Zn(2+) site. C124 acts as the Nucleophile in catalysis.

Belongs to the MsrB Met sulfoxide reductase family. Zn(2+) serves as cofactor.

It catalyses the reaction L-methionyl-[protein] + [thioredoxin]-disulfide + H2O = L-methionyl-(R)-S-oxide-[protein] + [thioredoxin]-dithiol. The protein is Peptide methionine sulfoxide reductase MsrB of Alteromonas mediterranea (strain DSM 17117 / CIP 110805 / LMG 28347 / Deep ecotype).